The sequence spans 386 residues: 26S proteasome non-ATPase regulatory subunit 13 homolog A (386 aa).

At A2 the chain carries N-acetylalanine. In terms of domain architecture, PCI spans 173 to 347; that stretch reads EFSDFYKSAL…GTIYVSWAQP (175 aa).

Belongs to the proteasome subunit S11 family. Component of the 19S regulatory particle (RP/PA700) lid subcomplex of the 26S proteasome. The 26S proteasome is composed of a core protease (CP), known as the 20S proteasome, capped at one or both ends by the 19S regulatory particle (RP/PA700). The RP/PA700 complex is composed of at least 17 different subunits in two subcomplexes, the base and the lid, which form the portions proximal and distal to the 20S proteolytic core, respectively. As to expression, ubiquitous with highest expression in flowers.

Functionally, acts as a regulatory subunit of the 26S proteasome which is involved in the ATP-dependent degradation of ubiquitinated proteins. The sequence is that of 26S proteasome non-ATPase regulatory subunit 13 homolog A (RPN9A) from Arabidopsis thaliana (Mouse-ear cress).